A 216-amino-acid polypeptide reads, in one-letter code: Ribosomal RNA small subunit methyltransferase G (216 aa).

S-adenosyl-L-methionine is bound by residues Gly-82, Leu-87, 135-136 (AE), and Arg-148.

This sequence belongs to the methyltransferase superfamily. RNA methyltransferase RsmG family.

Its subcellular location is the cytoplasm. The catalysed reaction is guanosine(527) in 16S rRNA + S-adenosyl-L-methionine = N(7)-methylguanosine(527) in 16S rRNA + S-adenosyl-L-homocysteine. Its function is as follows. Specifically methylates the N7 position of guanine in position 527 of 16S rRNA. This chain is Ribosomal RNA small subunit methyltransferase G, found in Caulobacter vibrioides (strain ATCC 19089 / CIP 103742 / CB 15) (Caulobacter crescentus).